The chain runs to 201 residues: Holliday junction resolvase RecU (201 aa).

Positions 85, 87, 100, and 119 each coordinate Mg(2+).

This sequence belongs to the RecU family. Mg(2+) serves as cofactor.

The protein localises to the cytoplasm. It carries out the reaction Endonucleolytic cleavage at a junction such as a reciprocal single-stranded crossover between two homologous DNA duplexes (Holliday junction).. Functionally, endonuclease that resolves Holliday junction intermediates in genetic recombination. Cleaves mobile four-strand junctions by introducing symmetrical nicks in paired strands. Promotes annealing of linear ssDNA with homologous dsDNA. Required for DNA repair, homologous recombination and chromosome segregation. This chain is Holliday junction resolvase RecU, found in Geobacillus sp. (strain WCH70).